A 379-amino-acid chain; its full sequence is Glutamate 5-kinase (379 aa).

Lys15 serves as a coordination point for ATP. The substrate site is built by Ser59, Asp146, and Asn158. 178 to 179 provides a ligand contact to ATP; it reads TD. A PUA domain is found at 285-363; sequence RGAVTVDVGA…SEFERLLGYS (79 aa).

Belongs to the glutamate 5-kinase family.

It localises to the cytoplasm. It carries out the reaction L-glutamate + ATP = L-glutamyl 5-phosphate + ADP. It functions in the pathway amino-acid biosynthesis; L-proline biosynthesis; L-glutamate 5-semialdehyde from L-glutamate: step 1/2. Catalyzes the transfer of a phosphate group to glutamate to form L-glutamate 5-phosphate. This is Glutamate 5-kinase from Paracidovorax citrulli (strain AAC00-1) (Acidovorax citrulli).